The following is a 223-amino-acid chain: Deoxyribose-phosphate aldolase (223 aa).

Aspartate 91 serves as the catalytic Proton donor/acceptor. The active-site Schiff-base intermediate with acetaldehyde is lysine 153. The Proton donor/acceptor role is filled by lysine 183.

Belongs to the DeoC/FbaB aldolase family. DeoC type 1 subfamily.

It is found in the cytoplasm. The enzyme catalyses 2-deoxy-D-ribose 5-phosphate = D-glyceraldehyde 3-phosphate + acetaldehyde. It participates in carbohydrate degradation; 2-deoxy-D-ribose 1-phosphate degradation; D-glyceraldehyde 3-phosphate and acetaldehyde from 2-deoxy-alpha-D-ribose 1-phosphate: step 2/2. In terms of biological role, catalyzes a reversible aldol reaction between acetaldehyde and D-glyceraldehyde 3-phosphate to generate 2-deoxy-D-ribose 5-phosphate. This is Deoxyribose-phosphate aldolase from Mycoplasmopsis synoviae (strain 53) (Mycoplasma synoviae).